We begin with the raw amino-acid sequence, 75 residues long: SDASEPAPACVVMYESWRYTTAANNCADTVSVSVAYQDGATGPCATLPPGAVTTVGEGYLGEHGHPDHLALCPSS.

Cystine bridges form between Cys-10/Cys-26 and Cys-44/Cys-72.

In terms of biological role, inhibits mammalian alpha-amylases specifically but has no action on plant and microbial alpha-amylases. The polypeptide is Alpha-amylase inhibitor Paim-2 (Streptomyces olivaceoviridis (Streptomyces corchorusii)).